The primary structure comprises 1405 residues: MKDLLKFLKQQSKTEEFNGIKIGLASPDLIRSWSFGEVKKPETINYRTFKPEREGLFCARIFGPVKDYECLCGKYKRLKHRGVICEKCGVEVTQTKVRRERMGHIDLASPVAHIWFLKSLPSRIGLMLDMTLRDIERVLYFESFVVIEPGMTSLERGQMLTEENYLDALEEYGDEFEAKMGAEAVLELLRAIELEKEIEMMREELPSINSETRRKKITKRLKLVEAFFQSGNKPEWMILKVLPVLPPDLRPLVPLDGGRFATSDLNDLYRRVINRNNRLKRLLDLAAPDIIVRNEKRMLQESVDALLDNGRRGRAITGSNKRPLKSLADMIKGKQGRFRQNLLGKRVDYSGRSVITVGPTLRLHQCGLPKKMALELFKPFIYGKLEGRGLATTIKAAKKMVEREVPEVWDVLDDVIREHPVMLNRAPTLHRLGIQAFEPVLIEGKAIQLHPLVCAAYNADFDGDQMAVHVPLTLEAQLEARSLMMSTNNILSPANGEPVITPSQDVVLGLYYTSRECVNGKGEGMVFESVDEVEKAYRTKFAAIHARVKVRITETNIDENGERSESRRIVDTTVGRALLSRILPKGLSYDLVNQNMGKKQISKLLNTCYRQLGLKDTVIFADQLMYAGFHYATVSGASVGINDMVIPDEKYTLVADAEAEVLEIQEQFQSGLVTAGERYNKVIDIWASANEKVSKAMMENLSSETVINREGVPEKQESFNSIYMMADSGARGSAAQIRQLAGMRGLMAKPDGSIIETPIVANFREGLNVSQYFISTHGARKGLADTALKTANSGYLTRRLVDVAQDLVVIEDDCGTFEGLTMKPLIEGGDVVEPLRERVLGRVVAIDVMYPGTEKVLAPRNTLLDEAWCDLLEEHSVDEMIVRSVISCDTDFGVCKACYGRDLARGHIINQGEAIGVVAAQSIGEPGTQLTMRTFHIGGAASRASAENNVQVKNAGTVKLHNAKHVTNSEGKLVIVSRSSEIAIIDELGREKERYKVPYGTILEKLEEASVAAGEIIANWDPHTHPIISEVAGSIKFVDMLDGVTMTRQTDELTGLSSIVVMEVGQRPTAGKEMRPAIRLVGADGNDLMIPGTEVPAQYFLPANAIVNQDDNAPINVGDALARIPQESSKTRDITGGLPRVADLFEARKPKEPAILAEYSGTISFGKETKGKRRLVITPADGSEAYEEMIPKWRNLNVFEGEKVERGEVIADGAEAAHDILRLRGIHKVANYIVNEVQDVYRLQGVKINDKHIEVIIRQMLRKCEITNAGDSQFLAGEQAEVSRVKIANRELEAQGKQPATFERELLGITKASLATESFISAASFQETTRVLTEAAVGGKSDKLRGLKENVIVGRLIPAGTGYSYHQKRNAAAAAGTTTEAAPAISASEAEQNLADLLNLAGSSD.

Residues Cys-70, Cys-72, Cys-85, and Cys-88 each coordinate Zn(2+). Mg(2+) contacts are provided by Asp-460, Asp-462, and Asp-464. Positions 814, 888, 895, and 898 each coordinate Zn(2+).

The protein belongs to the RNA polymerase beta' chain family. The RNAP catalytic core consists of 2 alpha, 1 beta, 1 beta' and 1 omega subunit. When a sigma factor is associated with the core the holoenzyme is formed, which can initiate transcription. Mg(2+) serves as cofactor. Zn(2+) is required as a cofactor.

The enzyme catalyses RNA(n) + a ribonucleoside 5'-triphosphate = RNA(n+1) + diphosphate. In terms of biological role, DNA-dependent RNA polymerase catalyzes the transcription of DNA into RNA using the four ribonucleoside triphosphates as substrates. This Shewanella sediminis (strain HAW-EB3) protein is DNA-directed RNA polymerase subunit beta'.